The chain runs to 326 residues: Zinc finger CCCH domain-containing protein 15 (326 aa).

Residues 1 to 14 are compositionally biased toward gly residues; sequence MADGGGGGEAGSGG. Positions 1 to 142 are disordered; sequence MADGGGGGEA…SSSGSGSGEV (142 aa). Residues 24-33 are compositionally biased toward basic residues; that stretch reads KPPKNIRKRP. Residues 47-64 are compositionally biased toward low complexity; sequence SGAIAAARAKKAPSSTSK. The segment covering 81–100 has biased composition (polar residues); that stretch reads YESSRTIQASTDSRATATLE. Residues 104–125 show a composition bias toward basic and acidic residues; sequence EFDRDARAIRERQLKQAEESLK. Residues 187 to 215 form a C3H1-type zinc finger; sequence DYQPDICKDYKETGYCGYGDSCKFMHDRG. The segment at 265–303 adopts an RING-type zinc-finger fold; that stretch reads CYICREPFVDPVVTKCKHYFCEHCALKHHSKNKKCFVCN.

This chain is Zinc finger CCCH domain-containing protein 15, found in Oryza sativa subsp. japonica (Rice).